The primary structure comprises 1093 residues: Mediator of RNA polymerase II transcription subunit 14 (1093 aa).

Disordered regions lie at residues 1–62 (MPGV…IDGH) and 1034–1065 (ETKS…ANDT). A compositionally biased stretch (polar residues) spans 19 to 31 (DTQTPSNGDNLRN). Over residues 41–62 (KGDKDHDPDKESYAGKPRIDGH) the composition is skewed to basic and acidic residues. The span at 1040-1056 (DYSTQPAPENQSQTGAP) shows a compositional bias: polar residues.

This sequence belongs to the Mediator complex subunit 14 family. In terms of assembly, component of the Mediator complex.

It is found in the nucleus. Functionally, component of the Mediator complex, a coactivator involved in the regulated transcription of nearly all RNA polymerase II-dependent genes. Mediator functions as a bridge to convey information from gene-specific regulatory proteins to the basal RNA polymerase II transcription machinery. Mediator is recruited to promoters by direct interactions with regulatory proteins and serves as a scaffold for the assembly of a functional preinitiation complex with RNA polymerase II and the general transcription factors. This is Mediator of RNA polymerase II transcription subunit 14 (rgr1) from Aspergillus fumigatus (strain ATCC MYA-4609 / CBS 101355 / FGSC A1100 / Af293) (Neosartorya fumigata).